A 294-amino-acid polypeptide reads, in one-letter code: Aspartate carbamoyltransferase catalytic subunit (294 aa).

Residues Arg49 and Thr50 each coordinate carbamoyl phosphate. Position 77 (Lys77) interacts with L-aspartate. Residues Arg99, His127, and Gln130 each contribute to the carbamoyl phosphate site. Positions 161 and 211 each coordinate L-aspartate. Carbamoyl phosphate is bound by residues Gly250 and Pro251.

This sequence belongs to the aspartate/ornithine carbamoyltransferase superfamily. ATCase family. In terms of assembly, heterododecamer (2C3:3R2) of six catalytic PyrB chains organized as two trimers (C3), and six regulatory PyrI chains organized as three dimers (R2).

It catalyses the reaction carbamoyl phosphate + L-aspartate = N-carbamoyl-L-aspartate + phosphate + H(+). The protein operates within pyrimidine metabolism; UMP biosynthesis via de novo pathway; (S)-dihydroorotate from bicarbonate: step 2/3. Catalyzes the condensation of carbamoyl phosphate and aspartate to form carbamoyl aspartate and inorganic phosphate, the committed step in the de novo pyrimidine nucleotide biosynthesis pathway. The polypeptide is Aspartate carbamoyltransferase catalytic subunit (Sulfurovum sp. (strain NBC37-1)).